The chain runs to 457 residues: Keratin, type II cytoskeletal 7 (457 aa).

The residue at position 2 (Ser-2) is an N-acetylserine. Ser-2 is subject to Phosphoserine. The segment at 2 to 84 (SIHFSSRSTA…DPTIQQVRQE (83 aa)) is head. Residue Ser-7 is glycosylated (O-linked (GlcNAc) serine). At Arg-15 the chain carries Dimethylated arginine; alternate. Arg-15 is subject to Omega-N-methylarginine; alternate. A phosphoserine mark is found at Ser-47 and Ser-65. The segment at 84-120 (EEREQIKTLNNKFASFIDKVRFLEQQNKMLETKWALL) is coil 1A. One can recognise an IF rod domain in the interval 85–397 (EREQIKTLNN…KLLEGEESRL (313 aa)). At Thr-91 the chain carries Phosphothreonine. The interval 121-138 (QEQKSAKSSQLPRIFEAQ) is linker 1. A Glycyl lysine isopeptide (Lys-Gly) (interchain with G-Cter in SUMO2) cross-link involves residue Lys-124. A coil 1B region spans residues 139 to 230 (IAGLRQQLET…TLHETELAEL (92 aa)). N6-acetyllysine is present on Lys-173. A phosphoserine mark is found at Ser-211, Ser-246, and Ser-248. The linker 12 stretch occupies residues 231-254 (QSQISDTSVVLSMDNSRSLDLDGI). The interval 255–393 (IADVKAQYEE…ATYRKLLEGE (139 aa)) is coil 2. Glycyl lysine isopeptide (Lys-Gly) (interchain with G-Cter in SUMO2) cross-links involve residues Lys-259 and Lys-280. Thr-283 carries the phosphothreonine modification. Residues Lys-290 and Lys-325 each participate in a glycyl lysine isopeptide (Lys-Gly) (interchain with G-Cter in SUMO2) cross-link. The tail stretch occupies residues 394-457 (ESRLSGDGMG…TSTTRRGTHN (64 aa)).

This sequence belongs to the intermediate filament family. In terms of assembly, heterotetramer of two type I and two type II keratins. Interacts with eukaryotic translation initiator factor 3 (eIF3) subunit EIF3S10. Interacts with GPER1. Arg-15 is dimethylated, probably to asymmetric dimethylarginine. As to expression, expressed in most simple epithelia tested including liver, lactating mammary gland, lung, kidney, stomach, duodenum, colon, oviduct, uterus, pancreas, epididymis, prostate, preputial gland and mesothelium, and in most stratified epithelia tested including dorsal skin, paw/toe, tail, tongue, cervix, forestomach, and bladder. Also expressed in Henle layer of the inner root sheath of whisker follicle.

In terms of biological role, blocks interferon-dependent interphase and stimulates DNA synthesis in cells. This is Keratin, type II cytoskeletal 7 from Mus musculus (Mouse).